A 179-amino-acid chain; its full sequence is Dual-action ribosomal maturation protein DarP (179 aa).

It belongs to the DarP family.

The protein resides in the cytoplasm. Its function is as follows. Member of a network of 50S ribosomal subunit biogenesis factors which assembles along the 30S-50S interface, preventing incorrect 23S rRNA structures from forming. Promotes peptidyl transferase center (PTC) maturation. The protein is Dual-action ribosomal maturation protein DarP of Erwinia tasmaniensis (strain DSM 17950 / CFBP 7177 / CIP 109463 / NCPPB 4357 / Et1/99).